Reading from the N-terminus, the 315-residue chain is Protein MFI (315 aa).

Can homodimerize. Interacts with MFF; the interaction inhibits MFF interaction with DNM1L. As to expression, enriched in the pancreatic beta cell and the testis and is expressed at low levels in other tissues tested.

Its subcellular location is the cytoplasm. It localises to the cytosol. The protein localises to the mitochondrion outer membrane. Its function is as follows. Acts as an inhibitor of mitochondrial fission. Interacts with MFF and prevents DNM1L recruitment to mitochondria, promoting a more fused mitochondrial network. This chain is Protein MFI, found in Mus musculus (Mouse).